The primary structure comprises 348 residues: Anthranilate phosphoribosyltransferase (348 aa).

5-phospho-alpha-D-ribose 1-diphosphate is bound by residues Gly-93, 96–97 (GD), Thr-101, 103–106 (NVST), 121–129 (KHGNRAVSS), and Ser-133. Gly-93 lines the anthranilate pocket. Ser-105 contacts Mg(2+). Asn-124 contributes to the anthranilate binding site. Arg-179 contributes to the anthranilate binding site. The Mg(2+) site is built by Asp-238 and Glu-239.

It belongs to the anthranilate phosphoribosyltransferase family. Homodimer. Mg(2+) serves as cofactor.

It carries out the reaction N-(5-phospho-beta-D-ribosyl)anthranilate + diphosphate = 5-phospho-alpha-D-ribose 1-diphosphate + anthranilate. It participates in amino-acid biosynthesis; L-tryptophan biosynthesis; L-tryptophan from chorismate: step 2/5. In terms of biological role, catalyzes the transfer of the phosphoribosyl group of 5-phosphorylribose-1-pyrophosphate (PRPP) to anthranilate to yield N-(5'-phosphoribosyl)-anthranilate (PRA). The chain is Anthranilate phosphoribosyltransferase from Desulfotalea psychrophila (strain LSv54 / DSM 12343).